A 357-amino-acid chain; its full sequence is UDP-N-acetylglucosamine--N-acetylmuramyl-(pentapeptide) pyrophosphoryl-undecaprenol N-acetylglucosamine transferase (357 aa).

UDP-N-acetyl-alpha-D-glucosamine is bound by residues 12–14, asparagine 124, arginine 163, serine 189, isoleucine 243, 262–267, and glutamine 288; these read TGG and ALTVSE.

This sequence belongs to the glycosyltransferase 28 family. MurG subfamily.

Its subcellular location is the cell inner membrane. The catalysed reaction is di-trans,octa-cis-undecaprenyl diphospho-N-acetyl-alpha-D-muramoyl-L-alanyl-D-glutamyl-meso-2,6-diaminopimeloyl-D-alanyl-D-alanine + UDP-N-acetyl-alpha-D-glucosamine = di-trans,octa-cis-undecaprenyl diphospho-[N-acetyl-alpha-D-glucosaminyl-(1-&gt;4)]-N-acetyl-alpha-D-muramoyl-L-alanyl-D-glutamyl-meso-2,6-diaminopimeloyl-D-alanyl-D-alanine + UDP + H(+). Its pathway is cell wall biogenesis; peptidoglycan biosynthesis. Its function is as follows. Cell wall formation. Catalyzes the transfer of a GlcNAc subunit on undecaprenyl-pyrophosphoryl-MurNAc-pentapeptide (lipid intermediate I) to form undecaprenyl-pyrophosphoryl-MurNAc-(pentapeptide)GlcNAc (lipid intermediate II). The protein is UDP-N-acetylglucosamine--N-acetylmuramyl-(pentapeptide) pyrophosphoryl-undecaprenol N-acetylglucosamine transferase of Pseudomonas paraeruginosa (strain DSM 24068 / PA7) (Pseudomonas aeruginosa (strain PA7)).